Here is a 596-residue protein sequence, read N- to C-terminus: Serine/threonine-protein kinase PknH (596 aa).

Residues 1 to 373 (MSDAQDSRVG…QTPRKTNPWP (373 aa)) lie on the Cytoplasmic side of the membrane. The Protein kinase domain maps to 16–276 (YHLKRLLGRG…DLALAAHEAL (261 aa)). ATP-binding positions include 22-30 (LGRGGMGEV) and Lys45. Asp139 acts as the Proton acceptor in catalysis. Thr170 carries the post-translational modification Phosphothreonine. The interval 292–368 (QESTLPGTAA…PSPWAQTPRK (77 aa)) is disordered. Residues 307–318 (PTMPTVTPPPIQ) show a composition bias toward pro residues. A helical membrane pass occupies residues 374-394 (LVAGAAAVVLVLVLGAIGIWI). The Extracellular segment spans residues 395–596 (ANRPKPVQPP…AKIVDKVNKE (202 aa)).

The protein belongs to the protein kinase superfamily. Ser/Thr protein kinase family. Post-translationally, autophosphorylated on threonine and serine residues.

The protein localises to the cell membrane. The enzyme catalyses L-seryl-[protein] + ATP = O-phospho-L-seryl-[protein] + ADP + H(+). The catalysed reaction is L-threonyl-[protein] + ATP = O-phospho-L-threonyl-[protein] + ADP + H(+). The protein is Serine/threonine-protein kinase PknH (pknH) of Mycobacterium bovis (strain ATCC BAA-935 / AF2122/97).